The primary structure comprises 142 residues: MYHGNAHRRFGRTHEHRKAMFANMCQALIKHEQIVTTLPKAKDLRPVVEKLVTLGKRGDLHARRQAIAQIKDVALVGKLFAVLGPRYKERHGGYTRVLKAGFRYGDNAPMAVIEFVDRDVDAKGKDSGPVFGADQDEAALAS.

The protein belongs to the bacterial ribosomal protein bL17 family. In terms of assembly, part of the 50S ribosomal subunit. Contacts protein L32.

This Methylocella silvestris (strain DSM 15510 / CIP 108128 / LMG 27833 / NCIMB 13906 / BL2) protein is Large ribosomal subunit protein bL17.